Here is a 247-residue protein sequence, read N- to C-terminus: Ribonuclease 3 (247 aa).

The 129-residue stretch at 21-149 (LQKLSKKIGI…LVGAIYLDQG (129 aa)) folds into the RNase III domain. Glutamate 62 contributes to the Mg(2+) binding site. Residue aspartate 66 is part of the active site. Residues asparagine 135 and glutamate 138 each coordinate Mg(2+). The active site involves glutamate 138. The DRBM domain occupies 176 to 245 (DYKTQLQEYS…AKELYNRIRK (70 aa)).

It belongs to the ribonuclease III family. In terms of assembly, homodimer. It depends on Mg(2+) as a cofactor.

Its subcellular location is the cytoplasm. The enzyme catalyses Endonucleolytic cleavage to 5'-phosphomonoester.. In terms of biological role, digests double-stranded RNA. Involved in the processing of primary rRNA transcript to yield the immediate precursors to the large and small rRNAs (23S and 16S). Processes some mRNAs, and tRNAs when they are encoded in the rRNA operon. Processes pre-crRNA and tracrRNA of type II CRISPR loci if present in the organism. This Leptospira interrogans serogroup Icterohaemorrhagiae serovar copenhageni (strain Fiocruz L1-130) protein is Ribonuclease 3.